The sequence spans 262 residues: Protein BREAKING OF ASYMMETRY IN THE STOMATAL LINEAGE (262 aa).

Disordered regions lie at residues 32-107 and 129-222; these read DEDG…QPPV and KEGK…GRGS. Residues 37–47 are compositionally biased toward low complexity; that stretch reads NNNGNTTNNNN. 2 consecutive short sequence motifs (nuclear localization signal) follow at residues 50 to 57 and 61 to 68; these read FKRIKRKI and KKKRSERK. The segment covering 51-66 has biased composition (basic residues); the sequence is KRIKRKIKSTKKKRSE. Phosphoserine; by ASK7 occurs at positions 72, 85, 86, and 87. A compositionally biased stretch (low complexity) spans 84-95; sequence RSSSVSPTTSGS. Ser89 bears the Phosphoserine; by ASK7 and MPK6 mark. Thr91 carries the post-translational modification Phosphothreonine; by ASK7. Basic and acidic residues predominate over residues 129 to 146; the sequence is KEGKQEKKETESSSEKSP. Residues Ser145 and Ser168 each carry the phosphoserine; by MPK6 modification. Residues 179–189 show a composition bias toward polar residues; the sequence is NDNTSCQGTKD. Over residues 190-200 the composition is skewed to basic and acidic residues; that stretch reads VSSDVTERTKE. Residues 222–262 form a required for polarization at the cell cortex region; it reads SFAFPILGVEWMGSPAKMPESDDLSPKKQKPVALGFQCCRF. The FxFP, required for cortical polarity formation motif lies at 223–226; it reads FAFP. 2 positions are modified to phosphoserine; by MPK6: Ser235 and Ser246.

In terms of assembly, component of a complex made of POLAR, BASL, ASK7/BIN2 and ASK3/SK12. Interacts with POLAR, ASK7/BIN2 and ASK3/SK12. Binds to YDA when phosphorylated. Interacts with MPK6, MPK3 and MKK5. In terms of processing, cortical localization of BASL requires phosphorylation mediated by MPK3 and MPK6. Phosphorylation promotes YDA binding. Phosphorylation status modulates subcellular mobility. As to expression, mostly expressed in stomatal lineage cells including asymmetrically dividing meristemoid mother cells (MMCs) and meristemoids, and, at lower levels, in their sisters. Also present in vasculature. Expressed at low levels in the epidermal pavement cells.

It is found in the cytoplasm. The protein localises to the nucleus. It localises to the cell cortex. The protein resides in the cell membrane. Functionally, regulates asymmetric cell division (ACD), especially in stomatal-lineage cells, probably by modulating accumulation and subcellular polarization of POLAR and SPCH. Mediates an attenuation of MAPK signaling upon polarization of POLAR and ASK7/BIN2 in stomatal lineage ground cells (SLGCs) undergoing ACD, and relieves BIN2 inhibition of SPCH in the nucleus. When phosphorylated, functions as a scaffold and recruits the MAPKKK YODA, MPK3 and MPK6 to spatially reorganize the MAPK signaling pathway at the cortex of cells undergoing ACD. Cortical polarization leads to elevated nuclear MPK6 signaling and lowered SPCH abundance in one of the two daughter cells, thus differentiating the two daughter cells after ACD. This Arabidopsis thaliana (Mouse-ear cress) protein is Protein BREAKING OF ASYMMETRY IN THE STOMATAL LINEAGE.